The primary structure comprises 137 residues: uncharacterized protein (137 aa).

Residues 1-10 (MISVDVPGHP) are compositionally biased toward low complexity. The interval 1 to 23 (MISVDVPGHPGDAGGGGGGARKV) is disordered. Over residues 11–20 (GDAGGGGGGA) the composition is skewed to gly residues.

This is an uncharacterized protein from Human adenovirus C serotype 2 (HAdV-2).